A 485-amino-acid polypeptide reads, in one-letter code: Zinc finger protein 165 (485 aa).

K23 is covalently cross-linked (Glycyl lysine isopeptide (Lys-Gly) (interchain with G-Cter in SUMO2)). One can recognise an SCAN box domain in the interval 62-127 (GPREALSRLR…EEAVTILEDL (66 aa)). Residues K162 and K195 each participate in a glycyl lysine isopeptide (Lys-Gly) (interchain with G-Cter in SUMO2) cross-link. Residues 290–314 (KSCKHGTCDQSFKWNSDFINHQIIY) form a C2H2-type 1; degenerate zinc finger. C2H2-type zinc fingers lie at residues 344–366 (HQCN…QRIH), 372–394 (YECN…RRIH), 400–422 (FGCK…QRIH), 428–450 (YECS…FRIH), and 456–478 (YECS…QRIH).

Belongs to the krueppel C2H2-type zinc-finger protein family. Expressed specifically in testis.

It is found in the nucleus. Functionally, may be involved in transcriptional regulation. This is Zinc finger protein 165 (ZNF165) from Homo sapiens (Human).